We begin with the raw amino-acid sequence, 591 residues long: MNELIKYKLELLPDSPGCYLHKDKHGTIIYVGKAKNLRNRVRSYFRGSHDTKTEMLVSEIEDFEFIVTGSNTEALLLEINLIQKNMPKYNIKLKDDKSYPFIKITNEPFPRLLITRQIKKQDGLYFGPYPDSYTANEVKKLLDRIFPFKKCKNPINKVCFYYHLGQCNAHSICQTDKAYWDGLVEDVKLFLTGKDDKIVTGLKEKMLAASQAMEFERAAEYRDLISGIATLRTKQRIMSKDLQDRDIFGYYVDKGWMCVQVFFVRQGKLIQRDVNMFPYYNEAEEDFLTYIGQFYLDQKHFLPKEVFIPDTIDQDLVQAVVPTKIVKPQRGEKKQLVALATKNARVSLQQKFDLLEKDLRKTKGAIDHLGQLLQIDRPYRIEAFDNSNIQGTSPVAAMVVFKDGKPSKKDYRKFKIKTVTGPDDYASMREVIFRRYSRVLKDKLEMPDLIIIDGGQGQVNVAKDVIENQLGLQIPIAGLQKNDRHQTHELLFGDPLEVVELPRNSEEFFLLHRIQDEVHRFAITFHRQVRSKNSFSSKLDGIEGLGPKRKQALLKHFKNMTAISQASVDEVRSLGIPEKVAQALLDSFNEV.

Positions 14–91 (DSPGCYLHKD…IQKNMPKYNI (78 aa)) constitute a GIY-YIG domain. Residues 196–231 (DKIVTGLKEKMLAASQAMEFERAAEYRDLISGIATL) form the UVR domain.

It belongs to the UvrC family. As to quaternary structure, interacts with UvrB in an incision complex.

The protein resides in the cytoplasm. In terms of biological role, the UvrABC repair system catalyzes the recognition and processing of DNA lesions. UvrC both incises the 5' and 3' sides of the lesion. The N-terminal half is responsible for the 3' incision and the C-terminal half is responsible for the 5' incision. This Streptococcus uberis (strain ATCC BAA-854 / 0140J) protein is UvrABC system protein C.